An 88-amino-acid polypeptide reads, in one-letter code: UPF0335 protein WRi_003770 (88 aa).

It belongs to the UPF0335 family.

The protein is UPF0335 protein WRi_003770 of Wolbachia sp. subsp. Drosophila simulans (strain wRi).